Here is a 92-residue protein sequence, read N- to C-terminus: RNA-binding protein Hfq (92 aa).

A Sm domain is found at 9-68; sequence DPFLNALRRERVPVSVYLVNGIKLQGTIESFDQFVVLLRNTVSQMVYKHAISTVVPARNV. Residues 72-92 form a disordered region; sequence PGGGYVQSNENNQAEDDDVEQ.

Belongs to the Hfq family. As to quaternary structure, homohexamer.

RNA chaperone that binds small regulatory RNA (sRNAs) and mRNAs to facilitate mRNA translational regulation in response to envelope stress, environmental stress and changes in metabolite concentrations. Also binds with high specificity to tRNAs. The sequence is that of RNA-binding protein Hfq from Xanthomonas campestris pv. campestris (strain 8004).